The following is a 189-amino-acid chain: TARYTALVAKDAKRAAADMGKVLHVEIDPEDAKVERMAKDESNQFGLFSWEFVRRHGLHLFGTCSTWFLLDIAFYSQNLFQKDVFTAIGWIPPAKTMNAVQEVYKIARAQTLIALCSTVPGYWFTVAFIDIIGRFAIQLMGFFFMTVFMFAIAIPYHHWTLQENRIGFVIMYSLTFFFANFGPNATTFV.

Over 1-55 the chain is Cytoplasmic; sequence TARYTALVAKDAKRAAADMGKVLHVEIDPEDAKVERMAKDESNQFGLFSWEFVRR. Residues 56–76 form a helical membrane-spanning segment; sequence HGLHLFGTCSTWFLLDIAFYS. Topologically, residues 77–111 are extracellular; that stretch reads QNLFQKDVFTAIGWIPPAKTMNAVQEVYKIARAQT. The chain crosses the membrane as a helical span at residues 112–132; that stretch reads LIALCSTVPGYWFTVAFIDII. The Cytoplasmic segment spans residues 133–134; sequence GR. Residues 135–155 traverse the membrane as a helical segment; that stretch reads FAIQLMGFFFMTVFMFAIAIP. Residues 156–165 lie on the Extracellular side of the membrane; sequence YHHWTLQENR. A helical membrane pass occupies residues 166–186; it reads IGFVIMYSLTFFFANFGPNAT. The Cytoplasmic portion of the chain corresponds to 187–189; sequence TFV.

This sequence belongs to the major facilitator superfamily. Phosphate:H(+) symporter (TC 2.A.1.9) family.

It is found in the cell membrane. The catalysed reaction is phosphate(in) + H(+)(in) = phosphate(out) + H(+)(out). Its function is as follows. Low-affinity transporter for external inorganic phosphate (Pi). This chain is Low affinity inorganic phosphate transporter 2, found in Petunia hybrida (Petunia).